The chain runs to 485 residues: Glutamyl-tRNA(Gln) amidotransferase subunit A (485 aa).

Catalysis depends on charge relay system residues Lys78 and Ser153. The active-site Acyl-ester intermediate is Ser177.

This sequence belongs to the amidase family. GatA subfamily. Heterotrimer of A, B and C subunits.

The catalysed reaction is L-glutamyl-tRNA(Gln) + L-glutamine + ATP + H2O = L-glutaminyl-tRNA(Gln) + L-glutamate + ADP + phosphate + H(+). Its function is as follows. Allows the formation of correctly charged Gln-tRNA(Gln) through the transamidation of misacylated Glu-tRNA(Gln) in organisms which lack glutaminyl-tRNA synthetase. The reaction takes place in the presence of glutamine and ATP through an activated gamma-phospho-Glu-tRNA(Gln). In Geobacter sp. (strain M21), this protein is Glutamyl-tRNA(Gln) amidotransferase subunit A.